Consider the following 119-residue polypeptide: Large ribosomal subunit protein uL22 (119 aa).

This sequence belongs to the universal ribosomal protein uL22 family. As to quaternary structure, part of the 50S ribosomal subunit.

Its function is as follows. This protein binds specifically to 23S rRNA; its binding is stimulated by other ribosomal proteins, e.g. L4, L17, and L20. It is important during the early stages of 50S assembly. It makes multiple contacts with different domains of the 23S rRNA in the assembled 50S subunit and ribosome. Functionally, the globular domain of the protein is located near the polypeptide exit tunnel on the outside of the subunit, while an extended beta-hairpin is found that lines the wall of the exit tunnel in the center of the 70S ribosome. The protein is Large ribosomal subunit protein uL22 of Rickettsia bellii (strain OSU 85-389).